The chain runs to 307 residues: Acetyl-coenzyme A carboxylase carboxyl transferase subunit beta (307 aa).

The CoA carboxyltransferase N-terminal domain occupies 28 to 297 (LWVKCPDTGQ…TPEPGTAPEP (270 aa)). Positions 286–307 (RRTPEPGTAPEPTTPEPLPNAA) are disordered. Over residues 292 to 307 (GTAPEPTTPEPLPNAA) the composition is skewed to pro residues.

Belongs to the AccD/PCCB family. Acetyl-CoA carboxylase is a heterohexamer composed of biotin carboxyl carrier protein (AccB), biotin carboxylase (AccC) and two subunits each of ACCase subunit alpha (AccA) and ACCase subunit beta (AccD).

The protein localises to the cytoplasm. The catalysed reaction is N(6)-carboxybiotinyl-L-lysyl-[protein] + acetyl-CoA = N(6)-biotinyl-L-lysyl-[protein] + malonyl-CoA. Its pathway is lipid metabolism; malonyl-CoA biosynthesis; malonyl-CoA from acetyl-CoA: step 1/1. Component of the acetyl coenzyme A carboxylase (ACC) complex. Biotin carboxylase (BC) catalyzes the carboxylation of biotin on its carrier protein (BCCP) and then the CO(2) group is transferred by the transcarboxylase to acetyl-CoA to form malonyl-CoA. In Methylorubrum extorquens (strain ATCC 14718 / DSM 1338 / JCM 2805 / NCIMB 9133 / AM1) (Methylobacterium extorquens), this protein is Acetyl-coenzyme A carboxylase carboxyl transferase subunit beta.